The chain runs to 633 residues: Micronuclear linker histone polyprotein (633 aa).

2 DNA-binding regions (HMG box) span residues proline 12–tyrosine 74 and proline 96–asparagine 164. The disordered stretch occupies residues alanine 170–glutamine 633. Over residues lysine 174–serine 190 the composition is skewed to basic residues. Low complexity-rich tracts occupy residues serine 212–serine 224 and asparagine 253–serine 271. Composition is skewed to basic residues over residues lysine 272–serine 309 and serine 330–serine 352. Composition is skewed to basic and acidic residues over residues lysine 353–lysine 374 and alanine 382–threonine 401. Over residues asparagine 406–glycine 416 the composition is skewed to low complexity. Residues serine 417–serine 444 are compositionally biased toward basic residues. A compositionally biased stretch (polar residues) spans proline 446–serine 469. Positions arginine 478–asparagine 491 are enriched in basic and acidic residues. A compositionally biased stretch (basic residues) spans serine 496 to lysine 524. Composition is skewed to basic and acidic residues over residues serine 540 to alanine 550 and glutamate 559 to lysine 612.

All four histones are processed from the precursor molecule. Post-translationally, phosphorylated in growing and dividing cells but not in nongrowing (starved) cells. In terms of processing, the N-terminus of MIC LH-alpha and MIC LH-delta is blocked.

It localises to the nucleus. Its subcellular location is the chromosome. The polypeptide is Micronuclear linker histone polyprotein (MLH) (Tetrahymena thermophila (strain SB210)).